A 185-amino-acid chain; its full sequence is Prorelaxin H1 (185 aa).

Residues 1-22 form the signal peptide; it reads MPRLFLFHLLEFCLLLNQFSRA. 3 cysteine pairs are disulfide-bonded: C35–C172, C47–C185, and C171–C176. A propeptide spans 56 to 158 (connecting peptide); it reads SLSQEDAPQT…KYLGLDTHSQ (103 aa).

The protein belongs to the insulin family. As to quaternary structure, heterodimer of a B chain and an A chain linked by two disulfide bonds. As to expression, prostate. Not expressed in placenta, decidua or ovary.

Its subcellular location is the secreted. In terms of biological role, relaxin is an ovarian hormone that acts with estrogen to produce dilatation of the birth canal in many mammals. May be involved in remodeling of connective tissues during pregnancy, promoting growth of pubic ligaments and ripening of the cervix. This chain is Prorelaxin H1 (RLN1), found in Homo sapiens (Human).